A 426-amino-acid polypeptide reads, in one-letter code: Formyl-CoA:oxalate CoA-transferase (426 aa).

Residues 17–18 (QS), R38, 72–75 (LDTK), 96–98 (NFG), R104, and 136–139 (KVYE) contribute to the CoA site. Catalysis depends on D168, which acts as the Nucleophile. 247 to 249 (GGQ) contacts substrate.

This sequence belongs to the CoA-transferase III family. Frc subfamily. Homodimer.

The enzyme catalyses formyl-CoA + oxalate = oxalyl-CoA + formate. The protein operates within metabolic intermediate degradation; oxalate degradation; CO(2) and formate from oxalate: step 1/2. Functionally, involved in the catabolism of oxalate and in the adapatation to low pH via the induction of the oxalate-dependent acid tolerance response (ATR). Catalyzes the transfer of the CoA moiety from formyl-CoA to oxalate. This is Formyl-CoA:oxalate CoA-transferase from Rhodopseudomonas palustris (strain BisB18).